The sequence spans 196 residues: MQNSPIPSPWQFIKENIPLLMVALVLALLLRFFVAEPRYIPSDSMLPTLEQGDRLVVEKVSYHFHPPQVGDIIVFHPPELLQVQGYDLGQAFIKRVIALPGQTVEVNNGIVYRDGQPLQEEYILEPPQYNLPAVRVPDGQVFVMGDNRNNSNDSHVWGFLPQQNIIGHALFRFFPASRWGQLGSFTFVPARTIINT.

The Cytoplasmic portion of the chain corresponds to 1–16 (MQNSPIPSPWQFIKEN). The helical transmembrane segment at 17 to 35 (IPLLMVALVLALLLRFFVA) threads the bilayer. The Periplasmic portion of the chain corresponds to 36–196 (EPRYIPSDSM…FVPARTIINT (161 aa)). Active-site residues include Ser44 and Lys94.

This sequence belongs to the peptidase S26 family.

The protein localises to the cell membrane. It catalyses the reaction Cleavage of hydrophobic, N-terminal signal or leader sequences from secreted and periplasmic proteins.. In Synechocystis sp. (strain ATCC 27184 / PCC 6803 / Kazusa), this protein is Probable signal peptidase I-1 (lepB1).